The chain runs to 271 residues: Proteasome inhibitor PI31 subunit (271 aa).

Position 2 is an N-acetylalanine (alanine 2). Residues 2–150 (AGLEVLFASA…PIHEQWEKVR (149 aa)) are important for homodimerization and interaction with FBXO7. Residues serine 153 and serine 189 each carry the phosphoserine modification. Position 205 is an omega-N-methylarginine (arginine 205). Arginine 219 is modified (asymmetric dimethylarginine). Residues 221–271 (LIDPSSGLPNRLPPGAVPPGARFDPFGPIGTSPSGPNPDHLPPPGYDDMYL) form a disordered region. Arginine 231 bears the Omega-N-methylarginine mark. Serine 252 is subject to Phosphoserine. Positions 255–265 (GPNPDHLPPPG) are enriched in pro residues.

This sequence belongs to the proteasome inhibitor PI31 family. As to quaternary structure, monomer and homodimer. Interacts with FBXO7.

Its subcellular location is the cytoplasm. The protein localises to the endoplasmic reticulum. In terms of biological role, plays an important role in control of proteasome function. Inhibits the hydrolysis of protein and peptide substrates by the 20S proteasome. Also inhibits the activation of the proteasome by the proteasome regulatory proteins PA700 and PA28. The protein is Proteasome inhibitor PI31 subunit (Psmf1) of Rattus norvegicus (Rat).